A 251-amino-acid polypeptide reads, in one-letter code: 2,3-bisphosphoglycerate-dependent phosphoglycerate mutase (251 aa).

Substrate-binding positions include 7–14, 20–21, Arg59, 86–89, Lys97, 113–114, and 186–187; these read RHGESEWN, TG, ERHY, RR, and GN. His8 acts as the Tele-phosphohistidine intermediate in catalysis. Glu86 functions as the Proton donor/acceptor in the catalytic mechanism.

The protein belongs to the phosphoglycerate mutase family. BPG-dependent PGAM subfamily.

It carries out the reaction (2R)-2-phosphoglycerate = (2R)-3-phosphoglycerate. Its pathway is carbohydrate degradation; glycolysis; pyruvate from D-glyceraldehyde 3-phosphate: step 3/5. Its function is as follows. Catalyzes the interconversion of 2-phosphoglycerate and 3-phosphoglycerate. The protein is 2,3-bisphosphoglycerate-dependent phosphoglycerate mutase of Treponema pallidum (strain Nichols).